Consider the following 483-residue polypeptide: Cobyric acid synthase (483 aa).

The GATase cobBQ-type domain maps to Trp-244 to Ala-430. Cys-325 serves as the catalytic Nucleophile. The active site involves His-422.

The protein belongs to the CobB/CobQ family. CobQ subfamily.

It participates in cofactor biosynthesis; adenosylcobalamin biosynthesis. Catalyzes amidations at positions B, D, E, and G on adenosylcobyrinic A,C-diamide. NH(2) groups are provided by glutamine, and one molecule of ATP is hydrogenolyzed for each amidation. The polypeptide is Cobyric acid synthase (Methylobacillus flagellatus (strain ATCC 51484 / DSM 6875 / VKM B-1610 / KT)).